The following is a 340-amino-acid chain: Protein HP_1247 (340 aa).

Seems to interact with H.pylori HolB.

Functionally, could be the functional equivalent of DNA polymerase III delta subunit (HolA). The polypeptide is Protein HP_1247 (Helicobacter pylori (strain ATCC 700392 / 26695) (Campylobacter pylori)).